Here is a 573-residue protein sequence, read N- to C-terminus: Lauric acid 10-hydroxylase (573 aa).

2 helical membrane passes run 3-23 (YVNI…LMSL) and 298-318 (LFPT…LLIF). Residue Cys-516 coordinates heme.

It belongs to the cytochrome P450 family. Requires heme as cofactor. Mostly expressed in flowers and leaves and, at low levels, in roots and stems.

The protein localises to the endoplasmic reticulum membrane. It catalyses the reaction an omega-methyl-medium-chain fatty acid + reduced [NADPH--hemoprotein reductase] + O2 = an omega-hydroxy-medium-chain fatty acid + oxidized [NADPH--hemoprotein reductase] + H2O + H(+). It carries out the reaction decanoate + reduced [NADPH--hemoprotein reductase] + O2 = 10-hydroxydecanoate + oxidized [NADPH--hemoprotein reductase] + H2O + H(+). The enzyme catalyses dodecanoate + reduced [NADPH--hemoprotein reductase] + O2 = 12-hydroxydodecanoate + oxidized [NADPH--hemoprotein reductase] + H2O + H(+). The protein operates within lipid metabolism; fatty acid metabolism. Functionally, cytochrome P450 hydroxylase catalyzing the conversion of decanoate (capric acid) and dodecanoate (lauric acid) to their corresponding omega-hydroxy metabolites, 10-hydroxydecanoate and 12-hydroxydodecanoate, respectively; these hydroxylated components affect plant growth, including reducing root elongation. The chain is Lauric acid 10-hydroxylase from Petunia hybrida (Petunia).